A 298-amino-acid polypeptide reads, in one-letter code: NAD kinase (298 aa).

Asp80 serves as the catalytic Proton acceptor. NAD(+)-binding positions include 80 to 81 (DG), 154 to 155 (ND), Arg182, Asp184, 195 to 200 (TAYALS), Ala219, and Gln253.

It belongs to the NAD kinase family. Requires a divalent metal cation as cofactor.

It is found in the cytoplasm. It carries out the reaction NAD(+) + ATP = ADP + NADP(+) + H(+). Functionally, involved in the regulation of the intracellular balance of NAD and NADP, and is a key enzyme in the biosynthesis of NADP. Catalyzes specifically the phosphorylation on 2'-hydroxyl of the adenosine moiety of NAD to yield NADP. The protein is NAD kinase of Acidovorax ebreus (strain TPSY) (Diaphorobacter sp. (strain TPSY)).